The following is an 88-amino-acid chain: Protein MATERNALLY EXPRESSED GENE 2 (88 aa).

The first 27 residues, 1-27 (MEYRKRVDALVFFSLLLLGYFAAHAHG), serve as a signal peptide directing secretion. Cys65 and Cys87 are joined by a disulfide.

The protein belongs to the MEG family. As to expression, expressed exclusively in endosperm.

The protein is Protein MATERNALLY EXPRESSED GENE 2 (MEG2) of Zea mays (Maize).